The following is a 664-amino-acid chain: Putative peroxisomal acyl-coenzyme A oxidase 1.2 (664 aa).

Position 399 to 404 (399 to 404) interacts with FAD; that stretch reads CGGHGY. Positions 662–664 match the Microbody targeting signal motif; it reads AKL.

It belongs to the acyl-CoA oxidase family. FAD is required as a cofactor.

The protein resides in the peroxisome. The catalysed reaction is a 2,3-saturated acyl-CoA + O2 = a (2E)-enoyl-CoA + H2O2. Its function is as follows. Catalyzes the desaturation of acyl-CoAs to 2-trans-enoyl-CoAs. In Arabidopsis thaliana (Mouse-ear cress), this protein is Putative peroxisomal acyl-coenzyme A oxidase 1.2 (ACX1.2).